The sequence spans 193 residues: Ion-translocating oxidoreductase complex subunit A (193 aa).

Transmembrane regions (helical) follow at residues 5–25 (LLLF…FLGL), 39–59 (IGMG…SWLM), 62–82 (FILV…LVIA), 102–122 (LLGI…VALL), 134–154 (AVYG…FAAI), and 171–191 (SIGL…SGLV).

The protein belongs to the NqrDE/RnfAE family. As to quaternary structure, the complex is composed of six subunits: RnfA, RnfB, RnfC, RnfD, RnfE and RnfG.

Its subcellular location is the cell inner membrane. In terms of biological role, part of a membrane-bound complex that couples electron transfer with translocation of ions across the membrane. The protein is Ion-translocating oxidoreductase complex subunit A of Proteus mirabilis (strain HI4320).